Here is a 91-residue protein sequence, read N- to C-terminus: DNA-directed RNA polymerase subunit omega (91 aa).

The protein belongs to the RNA polymerase subunit omega family. In terms of assembly, the RNAP catalytic core consists of 2 alpha, 1 beta, 1 beta' and 1 omega subunit. When a sigma factor is associated with the core the holoenzyme is formed, which can initiate transcription.

It carries out the reaction RNA(n) + a ribonucleoside 5'-triphosphate = RNA(n+1) + diphosphate. In terms of biological role, promotes RNA polymerase assembly. Latches the N- and C-terminal regions of the beta' subunit thereby facilitating its interaction with the beta and alpha subunits. This is DNA-directed RNA polymerase subunit omega from Pectobacterium carotovorum subsp. carotovorum (strain PC1).